The following is a 316-amino-acid chain: CD-NTase-associated protein 12 (316 aa).

Positions 4 to 121 (RIFIGSSSEG…MLGITQTRYE (118 aa)) constitute a TIR domain. Residues 161–316 (STVIAISYFE…ECVEIIEPQP (156 aa)) form an STING domain region. Residues F172, P237, and D253 each contribute to the 3',3'-c-di-GMP site.

In the C-terminal section; belongs to the bacterial STING family. In terms of assembly, forms homodimers; in the presence of c-di-GMP forms filaments with an ordered array of parallel-stacked subunits.

It catalyses the reaction NAD(+) + H2O = ADP-D-ribose + nicotinamide + H(+). Its activity is regulated as follows. NAD(+) hydrolase activity is strongly stimulated by c-di-GMP, weakly by 3'3'-cGAMP, very weakly by c-di-AMP but not at all by 2'3'-cGAMP. Self-association of TIR domains is required for NADase activity. Effector protein of a CBASS antiviral system with NAD(+) hydrolase activity. CBASS (cyclic oligonucleotide-based antiphage signaling system) provides immunity against bacteriophage. The CD-NTase protein synthesizes cyclic nucleotides in response to infection; these serve as specific second messenger signals. The signals activate a diverse range of effectors, leading to bacterial cell death and thus abortive phage infection. A type I-D(GG) CBASS system. Its function is as follows. Binds c-di-GMP (synthesized by the cognate CdnE encoded upstream in the same operon) but not c-di-AMP, 2'-3'-cGAMP, 3'-3'-cGAMP or cUMP-AMP (tested without the N-terminal TIR domain). Upon activation by c-di-GMP forms filaments which hydrolyze NAD(+); filament formation is required for enzyme activation. This Lachnospiraceae bacterium (strain RUG226) protein is CD-NTase-associated protein 12.